The sequence spans 156 residues: Small ribosomal subunit protein uS7 (156 aa).

It belongs to the universal ribosomal protein uS7 family. Part of the 30S ribosomal subunit. Contacts proteins S9 and S11.

Its function is as follows. One of the primary rRNA binding proteins, it binds directly to 16S rRNA where it nucleates assembly of the head domain of the 30S subunit. Is located at the subunit interface close to the decoding center, probably blocks exit of the E-site tRNA. This Streptococcus sanguinis (strain SK36) protein is Small ribosomal subunit protein uS7.